A 299-amino-acid polypeptide reads, in one-letter code: ATP phosphoribosyltransferase (299 aa).

It belongs to the ATP phosphoribosyltransferase family. Long subfamily. Requires Mg(2+) as cofactor.

It is found in the cytoplasm. It catalyses the reaction 1-(5-phospho-beta-D-ribosyl)-ATP + diphosphate = 5-phospho-alpha-D-ribose 1-diphosphate + ATP. Its pathway is amino-acid biosynthesis; L-histidine biosynthesis; L-histidine from 5-phospho-alpha-D-ribose 1-diphosphate: step 1/9. Feedback inhibited by histidine. Catalyzes the condensation of ATP and 5-phosphoribose 1-diphosphate to form N'-(5'-phosphoribosyl)-ATP (PR-ATP). Has a crucial role in the pathway because the rate of histidine biosynthesis seems to be controlled primarily by regulation of HisG enzymatic activity. In Shewanella oneidensis (strain ATCC 700550 / JCM 31522 / CIP 106686 / LMG 19005 / NCIMB 14063 / MR-1), this protein is ATP phosphoribosyltransferase.